Consider the following 235-residue polypeptide: Large ribosomal subunit protein uL1 (235 aa).

It belongs to the universal ribosomal protein uL1 family. In terms of assembly, part of the 50S ribosomal subunit.

In terms of biological role, binds directly to 23S rRNA. The L1 stalk is quite mobile in the ribosome, and is involved in E site tRNA release. Its function is as follows. Protein L1 is also a translational repressor protein, it controls the translation of the L11 operon by binding to its mRNA. This Fervidobacterium nodosum (strain ATCC 35602 / DSM 5306 / Rt17-B1) protein is Large ribosomal subunit protein uL1.